Here is a 231-residue protein sequence, read N- to C-terminus: Flagellar L-ring protein (231 aa).

A signal peptide spans 1-18; the sequence is MKHLLSVFALGGAVLLAG. Cys19 carries N-palmitoyl cysteine lipidation. A lipid anchor (S-diacylglycerol cysteine) is attached at Cys19.

This sequence belongs to the FlgH family. The basal body constitutes a major portion of the flagellar organelle and consists of four rings (L,P,S, and M) mounted on a central rod.

Its subcellular location is the cell outer membrane. It is found in the bacterial flagellum basal body. In terms of biological role, assembles around the rod to form the L-ring and probably protects the motor/basal body from shearing forces during rotation. The sequence is that of Flagellar L-ring protein from Pseudomonas entomophila (strain L48).